The following is a 91-amino-acid chain: Small ribosomal subunit protein uS19 (91 aa).

Belongs to the universal ribosomal protein uS19 family.

Protein S19 forms a complex with S13 that binds strongly to the 16S ribosomal RNA. In Chromohalobacter salexigens (strain ATCC BAA-138 / DSM 3043 / CIP 106854 / NCIMB 13768 / 1H11), this protein is Small ribosomal subunit protein uS19.